Reading from the N-terminus, the 106-residue chain is uncharacterized protein (106 aa).

This is an uncharacterized protein from Pyrococcus woesei.